We begin with the raw amino-acid sequence, 339 residues long: Serine/threonine-protein kinase SRK2J (339 aa).

The Protein kinase domain occupies 4 to 260 (YEMVKDLGFG…LKEIKSHAWF (257 aa)). ATP is bound by residues 10–18 (LGFGNFGLA) and K33. Catalysis depends on D123, which acts as the Proton acceptor. Residues 308 to 339 (SRPVESLGSDKKDDDEEEYLDANDEEWYDDYA) are disordered. Over residues 320–339 (DDDEEEYLDANDEEWYDDYA) the composition is skewed to acidic residues.

Belongs to the protein kinase superfamily. Ser/Thr protein kinase family. Expressed in seedlings.

It catalyses the reaction L-seryl-[protein] + ATP = O-phospho-L-seryl-[protein] + ADP + H(+). It carries out the reaction L-threonyl-[protein] + ATP = O-phospho-L-threonyl-[protein] + ADP + H(+). In Arabidopsis thaliana (Mouse-ear cress), this protein is Serine/threonine-protein kinase SRK2J (SRK2J).